The chain runs to 588 residues: MTSSIECQNIFRSLQLLDLFIKIGVKNLILCPGSRSAPLAIAAGELYKYGILNVFNSIDERSAGFHSLGISTASGDISLVVTTSGSAVGNLLPAAVEADRSCKSIVFITADRPLRLKNCGSNQTVNQEAFLNSVCRSTLSTNLNGIHKNNDDDILKIVKMIKKQLLQSPGPIHLNIPFEKPLDISLKNKRKTLKVFETLYLNKTCKFLKQNEQNKSIHFSKRIFESLDLSNSGIIIVGPYQGSIKDLVSFNNSLEKIQSITGWPVFADPVSGVSADLRGLVENWELIIKKNNNVIKCNQILRLGPLSSSNNLEKFLSDFDGIQILVKENNRRKLDPIKKSLEYEFGLTNFVNQLLGTYSDDQKKKKPLINLVKVLRREGQKISKILNEQIFLNKEITEYKLANFVPKIWPENYPIMLSASSPIRDWLTFSENGTLTRKCFSFRGASGIDGTLSLALGIARITQPLLLVTGDLALIHDINGFLIENSIDLNLTVLLINNNGGNIFNNLYKNNLEKEELKKLFLMPKSINWENLAKAFQVPIKIVSDLNKLPESFEWSLSMQKSVIIKVDINVDNEMKERSLILKKILNN.

Belongs to the TPP enzyme family. MenD subfamily. As to quaternary structure, homodimer. Requires Mg(2+) as cofactor. Mn(2+) is required as a cofactor. Thiamine diphosphate serves as cofactor.

It carries out the reaction isochorismate + 2-oxoglutarate + H(+) = 5-enolpyruvoyl-6-hydroxy-2-succinyl-cyclohex-3-ene-1-carboxylate + CO2. It functions in the pathway quinol/quinone metabolism; 1,4-dihydroxy-2-naphthoate biosynthesis; 1,4-dihydroxy-2-naphthoate from chorismate: step 2/7. The protein operates within cofactor biosynthesis; phylloquinone biosynthesis. In terms of biological role, catalyzes the thiamine diphosphate-dependent decarboxylation of 2-oxoglutarate and the subsequent addition of the resulting succinic semialdehyde-thiamine pyrophosphate anion to isochorismate to yield 2-succinyl-5-enolpyruvyl-6-hydroxy-3-cyclohexene-1-carboxylate (SEPHCHC). The chain is 2-succinyl-5-enolpyruvyl-6-hydroxy-3-cyclohexene-1-carboxylate synthase from Prochlorococcus marinus (strain MIT 9515).